Consider the following 342-residue polypeptide: Cell division protein FtsQ (342 aa).

Topologically, residues 1 to 80 (MDGAGSLTRS…ALVERYLPRR (80 aa)) are cytoplasmic. A helical membrane pass occupies residues 81–99 (VGISMTVLLLIGSCGFGIV). Residues 100 to 342 (KGGHLQDFVT…KKKKKAGDAA (243 aa)) lie on the Periplasmic side of the membrane. The POTRA domain maps to 124 to 192 (FRITSVVING…GQLMIELTER (69 aa)).

Belongs to the FtsQ/DivIB family. FtsQ subfamily.

Its subcellular location is the cell inner membrane. Essential cell division protein. This is Cell division protein FtsQ from Bradyrhizobium diazoefficiens (strain JCM 10833 / BCRC 13528 / IAM 13628 / NBRC 14792 / USDA 110).